A 226-amino-acid polypeptide reads, in one-letter code: Cytidylate kinase (226 aa).

10–18 (GPASSGKST) is an ATP binding site.

The protein belongs to the cytidylate kinase family. Type 1 subfamily.

The protein localises to the cytoplasm. It carries out the reaction CMP + ATP = CDP + ADP. The enzyme catalyses dCMP + ATP = dCDP + ADP. The chain is Cytidylate kinase from Streptococcus uberis (strain ATCC BAA-854 / 0140J).